The following is a 126-amino-acid chain: Holo-[acyl-carrier-protein] synthase (126 aa).

2 residues coordinate Mg(2+): Asp-9 and Glu-58.

Belongs to the P-Pant transferase superfamily. AcpS family. Mg(2+) is required as a cofactor.

Its subcellular location is the cytoplasm. It catalyses the reaction apo-[ACP] + CoA = holo-[ACP] + adenosine 3',5'-bisphosphate + H(+). In terms of biological role, transfers the 4'-phosphopantetheine moiety from coenzyme A to a Ser of acyl-carrier-protein. The sequence is that of Holo-[acyl-carrier-protein] synthase from Yersinia enterocolitica serotype O:8 / biotype 1B (strain NCTC 13174 / 8081).